The following is a 720-amino-acid chain: Nucleoporin NUP2 (720 aa).

The tract at residues 1–33 (MAKRVADAQIQRETYDSNESDDDVTPSTKVASS) is disordered. 2 positions are modified to phosphoserine: Ser17 and Ser20. An interaction with SRP1 NLS binding site 1 region spans residues 35-50 (VMNRRKIAMPKRRMAF). Disordered stretches follow at residues 52–92 (PFGS…SNSR) and 136–278 (KSIE…VDNN). Residues 67 to 69 (FSF) form an FXF 1 repeat. Over residues 81–92 (VDNSPTTESNSR) the composition is skewed to polar residues. Ser137 bears the Phosphoserine mark. Basic and acidic residues predominate over residues 147-159 (NDAKPAKVEDVQK). Ser165 is subject to Phosphoserine. The stretch at 189 to 192 (FSFG) is one FXFG 1 repeat. Over residues 193 to 202 (PKKENRKKDE) the composition is skewed to basic and acidic residues. Phosphoserine is present on residues Ser203 and Ser205. FXF repeat units follow at residues 216–218 (FKF) and 247–249 (FSF). Positions 243–278 (NAKPFSFSSATSTTEQTKSKNPLSLTEATKTNVDNN) are enriched in polar residues. 3 FXFG repeats span residues 285–288 (FTFG), 302–305 (FVFG), and 318–321 (FTFG). The span at 315 to 324 (KSSFTFGSTT) shows a compositional bias: polar residues. Residues 315-604 (KSSFTFGSTT…KPINLQNGEE (290 aa)) are disordered. Low complexity predominate over residues 345 to 360 (SNDSNPSFSFSIPSKN). Phosphoserine occurs at positions 348 and 351. An FXF 4 repeat occupies 352 to 354 (FSF). Thr361 bears the Phosphothreonine mark. An FXFG 5 repeat occupies 369–372 (FSFG). Residues 373-384 (VPNSSKNETSKP) are compositionally biased toward polar residues. Residues 386 to 389 (FSFG) form an FXFG 6 repeat. A compositionally biased stretch (basic and acidic residues) spans 424 to 435 (TEKEKESKKDSK). 5 FXFG repeats span residues 438-441 (FSFG), 474-477 (FSFG), 493-496 (FTFG), 511-514 (FSFG), and 524-527 (FSFG). Residues 479–495 (NTNTTKTADTKAPTFTF) show a composition bias toward low complexity. A compositionally biased stretch (polar residues) spans 513-533 (FGTSQPNNTPSFSFGKTTANL). A compositionally biased stretch (low complexity) spans 534 to 548 (PANSSTSPAPSIPST). Residues 550 to 552 (FKF) form an FXF 5 repeat. Residues 574-584 (TEATGNESQDA) show a composition bias toward polar residues. Ser581 carries the phosphoserine modification. The RanBD1 domain occupies 583-720 (DATKVDATPE…AIEDAKKEMK (138 aa)). Thr590 carries the post-translational modification Phosphothreonine.

As to quaternary structure, component of the nuclear pore complex (NPC). NPC constitutes the exclusive means of nucleocytoplasmic transport. NPCs allow the passive diffusion of ions and small molecules and the active, nuclear transport receptor-mediated bidirectional transport of macromolecules such as proteins, RNAs, ribonucleoparticles (RNPs), and ribosomal subunits across the nuclear envelope. Due to its 8-fold rotational symmetry, all subunits are present with 8 copies or multiples thereof. Binds to the nuclear basket of the NPC through NUP60 in a (GSP1, GSP2) GTPase-GTP-dependent manner. Interacts through its FG repeats with nuclear transport factors. Interacts with KAP122.

The protein localises to the nucleus. It localises to the nuclear pore complex. It is found in the nucleus membrane. Its function is as follows. Functions as a component of the nuclear pore complex (NPC). NPC components, collectively referred to as nucleoporins (NUPs), can play the role of both NPC structural components and of docking or interaction partners for transiently associated nuclear transport factors. Active directional transport is assured by both, a Phe-Gly (FG) repeat affinity gradient for these transport factors across the NPC and a transport cofactor concentration gradient across the nuclear envelope (GSP1 and GSP2 GTPases associated predominantly with GTP in the nucleus, with GDP in the cytoplasm). As one of the FG repeat nucleoporins NUP2 is involved in interactions with and guidance of nuclear transport receptors such as SRP1-KAP95 (importin alpha and beta) through the NPC. Like the closely related NUP1 it also plays an important role in disassembling and recycling SRP1-KAP95 to the cytoplasm after nuclear import. Upon entry of the heterotrimeric SRP1-KAP95-cargo complex in the nucleus, NUP2 binds through its N-terminus to the SRP1 nuclear localization signal (NLS) binding site, thus accelerating the release of the NLS-cargo. SRP1 in turn is released from NUP2 by binding of the GSP1-GTP associated export factor CSE1. NUP2 may also have a chromatin boundary/insulator activity through indirect interaction with genomic DNA via CSE1 and blocking of heterochromatin spreading. The chain is Nucleoporin NUP2 (NUP2) from Saccharomyces cerevisiae (strain ATCC 204508 / S288c) (Baker's yeast).